The sequence spans 359 residues: tRNA-specific 2-thiouridylase MnmA (359 aa).

Residues 10 to 17 and Leu-36 each bind ATP; that span reads GISGGVDS. Catalysis depends on Cys-101, which acts as the Nucleophile. A disulfide bridge connects residues Cys-101 and Cys-197. Residue Gly-125 coordinates ATP. The segment at 147-149 is interaction with tRNA; sequence KDQ. Cys-197 functions as the Cysteine persulfide intermediate in the catalytic mechanism. Residues 306-307 are interaction with tRNA; sequence RY.

Belongs to the MnmA/TRMU family.

The protein localises to the cytoplasm. The enzyme catalyses S-sulfanyl-L-cysteinyl-[protein] + uridine(34) in tRNA + AH2 + ATP = 2-thiouridine(34) in tRNA + L-cysteinyl-[protein] + A + AMP + diphosphate + H(+). Catalyzes the 2-thiolation of uridine at the wobble position (U34) of tRNA, leading to the formation of s(2)U34. The polypeptide is tRNA-specific 2-thiouridylase MnmA (Chlorobium chlorochromatii (strain CaD3)).